Reading from the N-terminus, the 226-residue chain is Adenylate kinase (226 aa).

12–17 (GSGKGT) lines the ATP pocket. The segment at 32–61 (ESGAIFREHIGGGTELGLKAKEYIERGDLV) is NMP. Residues S33, R38, 59–61 (DLV), 87–90 (GFPR), and Q94 each bind AMP. An LID region spans residues 128 to 171 (GRRLCVNDNNHPNHIAFEAIKPVEKDGKLVCRVCGGDLKTRPDD). R129 is an ATP binding site. AMP is bound by residues R168 and R180. A213 is a binding site for ATP.

Belongs to the adenylate kinase family. In terms of assembly, monomer.

Its subcellular location is the cytoplasm. It catalyses the reaction AMP + ATP = 2 ADP. The protein operates within purine metabolism; AMP biosynthesis via salvage pathway; AMP from ADP: step 1/1. Catalyzes the reversible transfer of the terminal phosphate group between ATP and AMP. Plays an important role in cellular energy homeostasis and in adenine nucleotide metabolism. The protein is Adenylate kinase of Desulfotalea psychrophila (strain LSv54 / DSM 12343).